A 1043-amino-acid chain; its full sequence is V(D)J recombination-activating protein 1 (1043 aa).

Residues 1–288 (MAASFPPTLG…LAVDFPEHFV (288 aa)) are interaction with importin alpha-1. The segment covering 40 to 54 (KTPEEAQKEKKDSFE) has biased composition (basic and acidic residues). A disordered region spans residues 40-80 (KTPEEAQKEKKDSFEGKPSLEQSPAVLDKADGQKPVPTQPL). A Glycyl lysine isopeptide (Lys-Gly) (interchain with G-Cter in ubiquitin) cross-link involves residue K234. Zn(2+) is bound by residues C269, H273, C293, C296, H298, C308, H310, C313, C316, C328, C331, C358, C363, H375, and H379. An RING-type zinc finger spans residues 293–332 (CQICEHILADPVETNCKHVFCRVCILRCLKVMGSYCPSCR). The RAG1-type zinc finger occupies 354-383 (LMVKCPAKECNEEVSLEKYNHHISSHKESK). The NBD DNA-binding region spans 392–459 (GGRPRQHLLS…QADELEAIMQ (68 aa)). 3 residues coordinate a divalent metal cation: D603, D711, and E965.

Belongs to the RAG1 family. Homodimer. Component of the RAG complex composed of core components RAG1 and RAG2, and associated component HMGB1 or HMGB2. Interacts with DCAF1, leading to recruitment of the CUL4A-RBX1-DDB1-DCAF1/VPRBP complex to ubiquitinate proteins and limit error-prone repair during V(D)J recombination. Requires Mg(2+) as cofactor. Mn(2+) is required as a cofactor. Post-translationally, autoubiquitinated in the presence of CDC34/UBCH3. In terms of tissue distribution, maturing lymphoid cells.

The protein resides in the nucleus. It catalyses the reaction S-ubiquitinyl-[E2 ubiquitin-conjugating enzyme]-L-cysteine + [acceptor protein]-L-lysine = [E2 ubiquitin-conjugating enzyme]-L-cysteine + N(6)-ubiquitinyl-[acceptor protein]-L-lysine.. Catalytic component of the RAG complex, a multiprotein complex that mediates the DNA cleavage phase during V(D)J recombination. V(D)J recombination assembles a diverse repertoire of immunoglobulin and T-cell receptor genes in developing B and T-lymphocytes through rearrangement of different V (variable), in some cases D (diversity), and J (joining) gene segments. In the RAG complex, RAG1 mediates the DNA-binding to the conserved recombination signal sequences (RSS) and catalyzes the DNA cleavage activities by introducing a double-strand break between the RSS and the adjacent coding segment. RAG2 is not a catalytic component but is required for all known catalytic activities. DNA cleavage occurs in 2 steps: a first nick is introduced in the top strand immediately upstream of the heptamer, generating a 3'-hydroxyl group that can attack the phosphodiester bond on the opposite strand in a direct transesterification reaction, thereby creating 4 DNA ends: 2 hairpin coding ends and 2 blunt, 5'-phosphorylated ends. The chromatin structure plays an essential role in the V(D)J recombination reactions and the presence of histone H3 trimethylated at 'Lys-4' (H3K4me3) stimulates both the nicking and haipinning steps. The RAG complex also plays a role in pre-B cell allelic exclusion, a process leading to expression of a single immunoglobulin heavy chain allele to enforce clonality and monospecific recognition by the B-cell antigen receptor (BCR) expressed on individual B-lymphocytes. The introduction of DNA breaks by the RAG complex on one immunoglobulin allele induces ATM-dependent repositioning of the other allele to pericentromeric heterochromatin, preventing accessibility to the RAG complex and recombination of the second allele. In addition to its endonuclease activity, RAG1 also acts as an E3 ubiquitin-protein ligase that mediates monoubiquitination of histone H3. Histone H3 monoubiquitination is required for the joining step of V(D)J recombination. Mediates polyubiquitination of KPNA1. The polypeptide is V(D)J recombination-activating protein 1 (RAG1) (Homo sapiens (Human)).